A 425-amino-acid chain; its full sequence is CDP-diacylglycerol--serine O-phosphatidyltransferase 1 (425 aa).

The segment covering 1–16 has biased composition (basic and acidic residues); sequence MEPNGYRKERRKEQHL. The interval 1 to 23 is disordered; sequence MEPNGYRKERRKEQHLGRMNGGG. The next 9 helical transmembrane spans lie at 42-62, 79-99, 105-125, 197-217, 227-247, 296-316, 321-341, 361-381, and 390-410; these read TISL…ALDP, WAMI…TVLI, IWRL…FLLF, PLLW…RHML, SIVL…MYTV, FIQV…TFFL, WIPP…LIAI, GAFC…CIKF, and MPLW…AFLL.

It belongs to the CDP-alcohol phosphatidyltransferase class-I family. As to expression, expressed in trichomes, leaf veins and root vasculature.

Its subcellular location is the endoplasmic reticulum membrane. It localises to the nucleus envelope. The enzyme catalyses a CDP-1,2-diacyl-sn-glycerol + L-serine = a 1,2-diacyl-sn-glycero-3-phospho-L-serine + CMP + H(+). Its pathway is phospholipid metabolism; phosphatidylethanolamine biosynthesis; phosphatidylethanolamine from CDP-diacylglycerol: step 1/2. Catalyzes a base-exchange reaction in which the polar head group of phosphatidylethanolamine (PE) or phosphatidylcholine (PC) is replaced by L-serine. Is essential for phosphatidylserine (PS) biosynthesis and PE seems to be the most plausible substrate. Plays an important role in microspore maturation. The protein is CDP-diacylglycerol--serine O-phosphatidyltransferase 1 (PSS1) of Arabidopsis thaliana (Mouse-ear cress).